Reading from the N-terminus, the 162-residue chain is Shikimate kinase (162 aa).

11 to 16 (GSGKSS) contributes to the ATP binding site. Residue Ser-15 coordinates Mg(2+). Positions 33, 57, and 80 each coordinate substrate. Residue Arg-116 participates in ATP binding. A substrate-binding site is contributed by Arg-132.

The protein belongs to the shikimate kinase family. In terms of assembly, monomer. It depends on Mg(2+) as a cofactor.

It is found in the cytoplasm. The catalysed reaction is shikimate + ATP = 3-phosphoshikimate + ADP + H(+). It functions in the pathway metabolic intermediate biosynthesis; chorismate biosynthesis; chorismate from D-erythrose 4-phosphate and phosphoenolpyruvate: step 5/7. Catalyzes the specific phosphorylation of the 3-hydroxyl group of shikimic acid using ATP as a cosubstrate. The polypeptide is Shikimate kinase (Helicobacter acinonychis (strain Sheeba)).